The following is a 288-amino-acid chain: Glycine--tRNA ligase alpha subunit (288 aa).

It belongs to the class-II aminoacyl-tRNA synthetase family. In terms of assembly, tetramer of two alpha and two beta subunits.

It is found in the cytoplasm. The enzyme catalyses tRNA(Gly) + glycine + ATP = glycyl-tRNA(Gly) + AMP + diphosphate. In Rickettsia africae (strain ESF-5), this protein is Glycine--tRNA ligase alpha subunit.